The following is a 345-amino-acid chain: Very-long-chain 3-oxoacyl-CoA reductase (345 aa).

The chain crosses the membrane as a helical span at residues glycine 26–valine 46. NADP(+) is bound by residues valine 71, aspartate 125, aspartate 133, asparagine 152, tyrosine 219, lysine 223, isoleucine 252, and serine 254. Residue tyrosine 219 is the Proton donor of the active site. Lysine 223 (lowers pKa of active site Tyr) is an active-site residue.

The protein belongs to the short-chain dehydrogenases/reductases (SDR) family.

The protein resides in the endoplasmic reticulum membrane. The enzyme catalyses a very-long-chain (3R)-3-hydroxyacyl-CoA + NADP(+) = a very-long-chain 3-oxoacyl-CoA + NADPH + H(+). Its pathway is lipid metabolism; fatty acid biosynthesis. Component of the microsomal membrane bound fatty acid elongation system, which produces the 26-carbon very long-chain fatty acids (VLCFA) from palmitate. Catalyzes the reduction of the 3-ketoacyl-CoA intermediate that is formed in each cycle of fatty acid elongation. VLCFAs serve as precursors for ceramide and sphingolipids. This Aspergillus fumigatus (strain CBS 144.89 / FGSC A1163 / CEA10) (Neosartorya fumigata) protein is Very-long-chain 3-oxoacyl-CoA reductase.